We begin with the raw amino-acid sequence, 544 residues long: Chaperonin GroEL 2 (544 aa).

ATP is bound by residues 29 to 32, 86 to 90, Gly-413, 479 to 481, and Asp-495; these read TLGP, DGTTT, and NAA.

It belongs to the chaperonin (HSP60) family. As to quaternary structure, forms a cylinder of 14 subunits composed of two heptameric rings stacked back-to-back. Interacts with the co-chaperonin GroES.

It is found in the cytoplasm. It catalyses the reaction ATP + H2O + a folded polypeptide = ADP + phosphate + an unfolded polypeptide.. Functionally, together with its co-chaperonin GroES, plays an essential role in assisting protein folding. The GroEL-GroES system forms a nano-cage that allows encapsulation of the non-native substrate proteins and provides a physical environment optimized to promote and accelerate protein folding. This is Chaperonin GroEL 2 from Prochlorococcus marinus (strain MIT 9515).